The chain runs to 213 residues: MKSLQALFGGTFDPVHYGHLKPVETLANLIGLTRVTIIPNNVPPHRPQPEANSVQRKHMLELAIANKPLFTLDERELKRNAPSYTAQTLKEWRQEQGPDVPLAFIIGQDSLLTFPTWYEYETILDNAHLIVCRRPGYPLEMAQPQYQQWLEDHLTHNQEDLHLQPAGKIYLAETPWFNISATIIRERLQNGESCEDLLPEPVLTYINQQGLYR.

It belongs to the NadD family.

The enzyme catalyses nicotinate beta-D-ribonucleotide + ATP + H(+) = deamido-NAD(+) + diphosphate. Its pathway is cofactor biosynthesis; NAD(+) biosynthesis; deamido-NAD(+) from nicotinate D-ribonucleotide: step 1/1. In terms of biological role, catalyzes the reversible adenylation of nicotinate mononucleotide (NaMN) to nicotinic acid adenine dinucleotide (NaAD). The chain is Probable nicotinate-nucleotide adenylyltransferase from Shigella boydii serotype 4 (strain Sb227).